The sequence spans 264 residues: tRNA pseudouridine synthase A (264 aa).

D51 (nucleophile) is an active-site residue. Y109 serves as a coordination point for substrate.

Belongs to the tRNA pseudouridine synthase TruA family. Homodimer.

The enzyme catalyses uridine(38/39/40) in tRNA = pseudouridine(38/39/40) in tRNA. Functionally, formation of pseudouridine at positions 38, 39 and 40 in the anticodon stem and loop of transfer RNAs. The sequence is that of tRNA pseudouridine synthase A from Vibrio vulnificus (strain CMCP6).